A 312-amino-acid chain; its full sequence is uncharacterized protein (312 aa).

The next 10 membrane-spanning stretches (helical) occupy residues 11–31, 46–66, 72–92, 98–118, 128–148, 155–171, 183–203, 221–241, 254–274, and 277–297; these read IAAI…KIAL, IAFA…SIRV, ILPL…FGLV, EAGI…AYVL, GFTV…GVDV, GSLL…MYNT, TELT…IALV, PGFV…TSFL, MSAF…VILN, and LAWY…GSNI. 2 consecutive EamA domains span residues 18–142 and 164–297; these read FIIG…FIFV and LSSA…GSNI.

Belongs to the EamA transporter family.

The protein resides in the cell membrane. This is an uncharacterized protein from Bacillus subtilis (strain 168).